Consider the following 115-residue polypeptide: NAD(P)H-quinone oxidoreductase subunit M (115 aa).

It belongs to the complex I NdhM subunit family. As to quaternary structure, NDH-1 can be composed of about 15 different subunits; different subcomplexes with different compositions have been identified which probably have different functions.

Its subcellular location is the cellular thylakoid membrane. It carries out the reaction a plastoquinone + NADH + (n+1) H(+)(in) = a plastoquinol + NAD(+) + n H(+)(out). The catalysed reaction is a plastoquinone + NADPH + (n+1) H(+)(in) = a plastoquinol + NADP(+) + n H(+)(out). NDH-1 shuttles electrons from an unknown electron donor, via FMN and iron-sulfur (Fe-S) centers, to quinones in the respiratory and/or the photosynthetic chain. The immediate electron acceptor for the enzyme in this species is believed to be plastoquinone. Couples the redox reaction to proton translocation, and thus conserves the redox energy in a proton gradient. Cyanobacterial NDH-1 also plays a role in inorganic carbon-concentration. The polypeptide is NAD(P)H-quinone oxidoreductase subunit M (Parasynechococcus marenigrum (strain WH8102)).